The following is a 206-amino-acid chain: Small ribosomal subunit protein uS4 (206 aa).

The region spanning 98 to 155 (TRLDNVVYRLGWALSRDQARQLVSHGKIAVNGKRVNIPSYNLKPGDVVELLDKDLIPV) is the S4 RNA-binding domain.

This sequence belongs to the universal ribosomal protein uS4 family. Part of the 30S ribosomal subunit. Contacts protein S5. The interaction surface between S4 and S5 is involved in control of translational fidelity.

In terms of biological role, one of the primary rRNA binding proteins, it binds directly to 16S rRNA where it nucleates assembly of the body of the 30S subunit. With S5 and S12 plays an important role in translational accuracy. This is Small ribosomal subunit protein uS4 from Dictyoglomus thermophilum (strain ATCC 35947 / DSM 3960 / H-6-12).